The primary structure comprises 543 residues: MAAKDVKFGADARERMLRGVDILANAVKVTLGPKGRNVVLDKSFGAPRITKDGVSVAKEIELADKFENMGAQMVREVASKTNDIAGDGTTTATVLAQAIIREGAKAVAAGMNPMDLKRGIDKAVGVVVDQLKSNTKKITSPEEIAQVGTISANGETEIGEMIASAMQKVGSEGVITVEEAKGLHTELDVVEGMQFDRGYISPYFVTNPEKMTADLDSPYILIHEKKLSSLQPMLPLLESVVQSGRPLVIIAEDVDGEALATLVVNKLRGGLKIAAVKAPGFGDRRKAMLEDIAILTGGQVISEDIGIKLESVTLEMLGRAKKIHIEKENTTIVEGAGNSDDIKGRCNQIRAQIEETTSDYDREKLQERLAKLAGGVAVIRVGGSTEVEVKERKDRVDDALHATRAAVEEGIVPGGGTALARASSALKGLTFDNDDQRVGGEIVRKALQAPLRQIAFNAGEDGAVIAGKVLENEGYVFGFDAQKGEYKDLVAAGIIDPTKVVRTALQDAASVGGLLITTEAMVAERPEKKAPAAAPGGMGDMDF.

ATP contacts are provided by residues 30–33 (TLGP), lysine 51, 87–91 (DGTTT), glycine 415, and aspartate 496.

The protein belongs to the chaperonin (HSP60) family. Forms a cylinder of 14 subunits composed of two heptameric rings stacked back-to-back. Interacts with the co-chaperonin GroES.

Its subcellular location is the cytoplasm. The catalysed reaction is ATP + H2O + a folded polypeptide = ADP + phosphate + an unfolded polypeptide.. In terms of biological role, together with its co-chaperonin GroES, plays an essential role in assisting protein folding. The GroEL-GroES system forms a nano-cage that allows encapsulation of the non-native substrate proteins and provides a physical environment optimized to promote and accelerate protein folding. In Gluconobacter oxydans (strain 621H) (Gluconobacter suboxydans), this protein is Chaperonin GroEL.